Reading from the N-terminus, the 129-residue chain is Large ribosomal subunit protein bL19 (129 aa).

This protein is located at the 30S-50S ribosomal subunit interface and may play a role in the structure and function of the aminoacyl-tRNA binding site. This chain is Large ribosomal subunit protein bL19, found in Rhodopseudomonas palustris (strain ATCC BAA-98 / CGA009).